The primary structure comprises 185 residues: HTH-type transcriptional regulator SACOL2593 (185 aa).

The HTH tetR-type domain occupies K6–F66. The H-T-H motif DNA-binding region spans S29–F48.

The chain is HTH-type transcriptional regulator SACOL2593 from Staphylococcus aureus (strain COL).